The chain runs to 802 residues: Ribosomal protein S6 kinase alpha-5 (802 aa).

The segment covering 1-22 (MEEEGGSSGGAAGTSADGGDGG) has biased composition (gly residues). The disordered stretch occupies residues 1–23 (MEEEGGSSGGAAGTSADGGDGGE). One can recognise a Protein kinase 1 domain in the interval 49–318 (FELLKVLGTG…ADEIKEHLFF (270 aa)). ATP-binding positions include 55–63 (LGTGAYGKV) and K81. Catalysis depends on D177, which acts as the Proton acceptor. S212 carries the post-translational modification Phosphoserine; by autocatalysis. The 69-residue stretch at 319–387 (QKINWDDLAA…VAPSILFKRN (69 aa)) folds into the AGC-kinase C-terminal domain. Position 360 is a phosphoserine; by MAPK1, MAPK3 and MAPK14 (S360). S376 and S381 each carry phosphoserine; by autocatalysis. The Protein kinase 2 domain occupies 426-687 (DLKDKPLGEG…MSGLRYNEWL (262 aa)). ATP is bound by residues 432 to 440 (LGEGSFSIC) and K455. Catalysis depends on D544, which acts as the Proton acceptor. Position 581 is a phosphothreonine; by MAPK1, MAPK3 and MAPK14 (T581). Phosphoserine is present on residues S647, S657, S691, and S695. The residue at position 700 (T700) is a Phosphothreonine; by MAPK1, MAPK3 and MAPK14. The disordered stretch occupies residues 741 to 802 (AKRRKMKKTS…TLFQFSDSVA (62 aa)). Positions 749 to 779 (TSTSTETRSSSSESSHSSSSHSHGKTTPTKT) are enriched in low complexity. Residues S750, S752, and S758 each carry the phosphoserine; by autocatalysis modification. A compositionally biased stretch (polar residues) spans 780-802 (LQPSNPADSNNPETLFQFSDSVA). Residue S798 is modified to Phosphoserine.

It belongs to the protein kinase superfamily. AGC Ser/Thr protein kinase family. S6 kinase subfamily. In terms of assembly, forms a complex with either MAPK1/ERK2 or MAPK3/ERK1 in quiescent cells which transiently dissociates following mitogenic stimulation. Also associates with MAPK14/p38-alpha. Activated RPS6KA5 associates with and phosphorylates the NF-kappa-B p65 subunit RELA. Interacts with CREBBP and EP300. Requires Mg(2+) as cofactor. In terms of processing, ser-376 and Thr-581 phosphorylation is required for kinase activity. Ser-376 and Ser-212 are autophosphorylated by the C-terminal kinase domain, and their phosphorylation is essential for the catalytic activity of the N-terminal kinase domain. Phosphorylated at Ser-360, Thr-581 and Thr-700 by MAPK1/ERK2, MAPK3/ERK1 and MAPK14/p38-alpha. Autophosphorylated at Ser-750, Ser-752 and Ser-758 by the N-terminal kinase domain. Post-translationally, ubiquitinated.

It localises to the nucleus. The enzyme catalyses L-seryl-[protein] + ATP = O-phospho-L-seryl-[protein] + ADP + H(+). It catalyses the reaction L-threonyl-[protein] + ATP = O-phospho-L-threonyl-[protein] + ADP + H(+). Activated by phosphorylation at Ser-360, Thr-581 and Thr-700 by MAPK1/ERK2, MAPK3/ERK1 and MAPK14/p38-alpha, and by further autophosphorylation of Ser-212, Ser-376 and Ser-381 by the activated C-terminal kinase domain. The active N-terminal kinase domain finally phosphorylates downstream substrates, as well as Ser-750, Ser-752 and Ser-758 in its own C-terminal region. In terms of biological role, serine/threonine-protein kinase that is required for the mitogen or stress-induced phosphorylation of the transcription factors CREB1 and ATF1 and for the regulation of the transcription factors RELA, STAT3 and ETV1/ER81, and that contributes to gene activation by histone phosphorylation and functions in the regulation of inflammatory genes. Phosphorylates CREB1 and ATF1 in response to mitogenic or stress stimuli such as UV-C irradiation, epidermal growth factor (EGF) and anisomycin. Plays an essential role in the control of RELA transcriptional activity in response to TNF and upon glucocorticoid, associates in the cytoplasm with the glucocorticoid receptor NR3C1 and contributes to RELA inhibition and repression of inflammatory gene expression. In skeletal myoblasts is required for phosphorylation of RELA at 'Ser-276' during oxidative stress. In erythropoietin-stimulated cells, is necessary for the 'Ser-727' phosphorylation of STAT3 and regulation of its transcriptional potential. Phosphorylates ETV1/ER81 at 'Ser-191' and 'Ser-216', and thereby regulates its ability to stimulate transcription, which may be important during development and breast tumor formation. Directly represses transcription via phosphorylation of 'Ser-1' of histone H2A. Phosphorylates 'Ser-10' of histone H3 in response to mitogenics, stress stimuli and EGF, which results in the transcriptional activation of several immediate early genes, including proto-oncogenes c-fos/FOS and c-jun/JUN. May also phosphorylate 'Ser-28' of histone H3. Mediates the mitogen- and stress-induced phosphorylation of high mobility group protein 1 (HMGN1/HMG14). In lipopolysaccharide-stimulated primary macrophages, acts downstream of the Toll-like receptor TLR4 to limit the production of pro-inflammatory cytokines. Functions probably by inducing transcription of the MAP kinase phosphatase DUSP1 and the anti-inflammatory cytokine interleukin 10 (IL10), via CREB1 and ATF1 transcription factors. Plays a role in neuronal cell death by mediating the downstream effects of excitotoxic injury. Phosphorylates TRIM7 at 'Ser-107' in response to growth factor signaling via the MEK/ERK pathway, thereby stimulating its ubiquitin ligase activity. The chain is Ribosomal protein S6 kinase alpha-5 (RPS6KA5) from Pongo abelii (Sumatran orangutan).